A 702-amino-acid chain; its full sequence is MLPTASSKRRTFAARYFTRSKSLVMGEQSRSPGRPLVPHKLGPVLKAGWLRKQRSIMKNWQQRWFVLRGDQLFYYKDKDESKPQGFISLQGTQVTELLPDPEDPGKHLFEITPGGATEREKVPANPEALLLMASSQRDMEDWVQAIRRVIWAPLGRGIFGQRLEDTVHHERKFGPRLAPLLVEQCVDFIRERGLSEEGLFRMPGQANLVRDLQDSFDCGEKPLFDSTTDVHTVASLLKLYLRELPEPVIPFARYEDFLSCAQLLTKDEGEGTVELAKQVSNLPQANYNLLRYICKFLDEVQAHSDVNKMSVQNLATVFGPNILRPQIEDPVTIMEGTSLVQHLMTVLIRKHGQLFAATSLEEPASPHGTVEWGSEEVTRDHRGEPGSPGLPTHRTSSLDGPAAAVLSRTSPPRLGSQTGPAATSPGKKMHTLPVWKSSFRQQGSRSESPKGVNSSLEVPIISSGGNWLINGLSSLRSHRRASSGDRLKDTGSAQRLSTYDNVPPSSQFSSTASVASTSWSVASSSREASVSSCTACRASNSSACSSLHTEWALEPSPLPSSSEGHQSPDLGHSLDEPCVGSGSSEPNDPGSPTQAHVRRCRALQGQVAELRAELCQQRTEYKRSLKSIEEGSADLRKQMSRLEEELDQERKKYAMLEIKLRNSERAREDAERRNQLLQREMEEFFSTLGSLTTGTKGSRAPE.

Residues 43–151 form the PH domain; that stretch reads PVLKAGWLRK…WVQAIRRVIW (109 aa). A Rho-GAP domain is found at 161–355; sequence QRLEDTVHHE…VLIRKHGQLF (195 aa). Disordered stretches follow at residues 360-433, 438-457, 480-511, and 555-596; these read LEEP…HTLP, SFRQQGSRSESPKGVNSSLE, RASSGDRLKDTGSAQRLSTYDNVPPSSQFSST, and PSPL…TQAH. Serine 365 and serine 397 each carry phosphoserine. 4 stretches are compositionally biased toward polar residues: residues 407–421, 438–456, 491–504, and 581–594; these read SRTSPPRLGSQTGPA, SFRQQGSRSESPKGVNSSL, GSAQRLSTYDNVPP, and SGSSEPNDPGSPTQ. Positions 594-691 form a coiled coil; it reads QAHVRRCRAL…EEFFSTLGSL (98 aa).

As to quaternary structure, interacts with VEZF1. As to expression, predominantly present in endothelial cells (at protein level).

It is found in the cytoplasm. It localises to the nucleus. In terms of biological role, rho GTPase-activating protein involved in the signal transduction pathway that regulates endothelial cell capillary tube formation during angiogenesis. Acts as a GTPase activator for the RAC1 by converting it to an inactive GDP-bound state. Inhibits RAC1-dependent lamellipodia formation. May also play a role in transcription regulation via its interaction with VEZF1, by regulating activity of the endothelin-1 (EDN1) promoter. The chain is Rho GTPase-activating protein 22 (Arhgap22) from Mus musculus (Mouse).